Reading from the N-terminus, the 313-residue chain is 2,3-dihydroxyphenylpropionate/2,3-dihydroxicinnamic acid 1,2-dioxygenase (313 aa).

Histidine 115 serves as the catalytic Proton donor. The Proton acceptor role is filled by histidine 179.

The protein belongs to the LigB/MhpB extradiol dioxygenase family. Homotetramer. Fe(2+) is required as a cofactor.

It catalyses the reaction 3-(2,3-dihydroxyphenyl)propanoate + O2 = (2Z,4E)-2-hydroxy-6-oxonona-2,4-dienedioate + H(+). It carries out the reaction (2E)-3-(2,3-dihydroxyphenyl)prop-2-enoate + O2 = (2Z,4E,7E)-2-hydroxy-6-oxonona-2,4,7-trienedioate + H(+). It functions in the pathway aromatic compound metabolism; 3-phenylpropanoate degradation. Functionally, catalyzes the non-heme iron(II)-dependent oxidative cleavage of 2,3-dihydroxyphenylpropionic acid and 2,3-dihydroxicinnamic acid into 2-hydroxy-6-ketononadienedioate and 2-hydroxy-6-ketononatrienedioate, respectively. The polypeptide is 2,3-dihydroxyphenylpropionate/2,3-dihydroxicinnamic acid 1,2-dioxygenase (Xanthobacter autotrophicus (strain ATCC BAA-1158 / Py2)).